A 251-amino-acid polypeptide reads, in one-letter code: Hydroxyacylglutathione hydrolase (251 aa).

The Zn(2+) site is built by histidine 53, histidine 55, aspartate 57, histidine 58, histidine 110, aspartate 127, and histidine 165.

The protein belongs to the metallo-beta-lactamase superfamily. Glyoxalase II family. In terms of assembly, monomer. Zn(2+) is required as a cofactor.

It catalyses the reaction an S-(2-hydroxyacyl)glutathione + H2O = a 2-hydroxy carboxylate + glutathione + H(+). It functions in the pathway secondary metabolite metabolism; methylglyoxal degradation; (R)-lactate from methylglyoxal: step 2/2. Its function is as follows. Thiolesterase that catalyzes the hydrolysis of S-D-lactoyl-glutathione to form glutathione and D-lactic acid. In Escherichia coli (strain UTI89 / UPEC), this protein is Hydroxyacylglutathione hydrolase.